A 610-amino-acid chain; its full sequence is UvrABC system protein C (610 aa).

In terms of domain architecture, GIY-YIG spans 16–94 (SQPGVYRMYD…IQRYQPRYNV (79 aa)). In terms of domain architecture, UVR spans 204–239 (SQVIEGLIKRMEEASQALRFEEAARIRDQIHAVRQV).

The protein belongs to the UvrC family. As to quaternary structure, interacts with UvrB in an incision complex.

The protein localises to the cytoplasm. The UvrABC repair system catalyzes the recognition and processing of DNA lesions. UvrC both incises the 5' and 3' sides of the lesion. The N-terminal half is responsible for the 3' incision and the C-terminal half is responsible for the 5' incision. This is UvrABC system protein C from Proteus mirabilis (strain HI4320).